The chain runs to 339 residues: Glyceraldehyde-3-phosphate dehydrogenase (339 aa).

NAD(+) contacts are provided by residues 12–13 (RI), Asp34, and Lys79. D-glyceraldehyde 3-phosphate contacts are provided by residues 150-152 (SCT), Thr181, 210-211 (TG), and Arg233. Cys151 functions as the Nucleophile in the catalytic mechanism. Asn316 serves as a coordination point for NAD(+).

The protein belongs to the glyceraldehyde-3-phosphate dehydrogenase family. In terms of assembly, homotetramer.

Its subcellular location is the cytoplasm. It carries out the reaction D-glyceraldehyde 3-phosphate + phosphate + NAD(+) = (2R)-3-phospho-glyceroyl phosphate + NADH + H(+). It functions in the pathway carbohydrate degradation; glycolysis; pyruvate from D-glyceraldehyde 3-phosphate: step 1/5. The polypeptide is Glyceraldehyde-3-phosphate dehydrogenase (GPD) (Cryptococcus neoformans var. neoformans serotype D (strain B-3501A) (Filobasidiella neoformans)).